The chain runs to 383 residues: 8-amino-7-oxononanoate synthase (383 aa).

Position 21 (Arg21) interacts with substrate. Residue 108-109 (GY) participates in pyridoxal 5'-phosphate binding. His133 provides a ligand contact to substrate. 3 residues coordinate pyridoxal 5'-phosphate: Ser179, His207, and Thr233. At Lys236 the chain carries N6-(pyridoxal phosphate)lysine. Thr350 serves as a coordination point for substrate.

This sequence belongs to the class-II pyridoxal-phosphate-dependent aminotransferase family. BioF subfamily. As to quaternary structure, homodimer. Pyridoxal 5'-phosphate serves as cofactor.

It catalyses the reaction 6-carboxyhexanoyl-[ACP] + L-alanine + H(+) = (8S)-8-amino-7-oxononanoate + holo-[ACP] + CO2. It participates in cofactor biosynthesis; biotin biosynthesis. In terms of biological role, catalyzes the decarboxylative condensation of pimeloyl-[acyl-carrier protein] and L-alanine to produce 8-amino-7-oxononanoate (AON), [acyl-carrier protein], and carbon dioxide. The polypeptide is 8-amino-7-oxononanoate synthase (Serratia proteamaculans (strain 568)).